A 75-amino-acid chain; its full sequence is RNA-binding protein Hfq (75 aa).

The 61-residue stretch at 9–69 (DQFLNQLRKE…ISTFAPERNI (61 aa)) folds into the Sm domain.

Belongs to the Hfq family. In terms of assembly, homohexamer.

RNA chaperone that binds small regulatory RNA (sRNAs) and mRNAs to facilitate mRNA translational regulation in response to envelope stress, environmental stress and changes in metabolite concentrations. Also binds with high specificity to tRNAs. This chain is RNA-binding protein Hfq, found in Geobacillus kaustophilus (strain HTA426).